The chain runs to 93 residues: uncharacterized protein (93 aa).

An N-terminal signal peptide occupies residues 1–22; sequence MNKYWLSGIIFLAYGLASPAFS.

This is an uncharacterized protein from Escherichia coli (strain K12).